A 1451-amino-acid chain; its full sequence is Protein clueless (1451 aa).

Disordered stretches follow at residues 1 to 101 (MALE…EYAA) and 264 to 286 (KKTRPDSVDCTPPEYVTPGVSEP). Residues 9–53 (NSNATATGDATATKASSKAKENNNTAGGKKNLNPIPSQQNSNQNL) are compositionally biased toward low complexity. The segment covering 66 to 75 (GKKKGKKNRN) has biased composition (basic residues). Serine 270 bears the Phosphoserine mark. One can recognise a Clu domain in the interval 424 to 666 (RAEDAFSSKL…RTFPPDVNFL (243 aa)). Disordered stretches follow at residues 722–775 (AKKQ…ESKT), 961–1012 (AVSS…SSVS), and 1413–1451 (ANNNGEAEDADPKDVKEQAQAGTQLTNGEKAAATEATSS). The span at 748–758 (GADKTDVKEEK) shows a compositional bias: basic and acidic residues. Over residues 969 to 984 (KKRGNGGKHNKHKSSK) the composition is skewed to basic residues. The span at 989-1010 (QQQQQTTGNQNGSSSGTSNGSS) shows a compositional bias: low complexity.

This sequence belongs to the CLU family.

It localises to the cytoplasm. Its function is as follows. mRNA-binding protein involved in proper cytoplasmic distribution of mitochondria. This is Protein clueless from Drosophila yakuba (Fruit fly).